Here is a 318-residue protein sequence, read N- to C-terminus: Methionyl-tRNA formyltransferase (318 aa).

Residue 112 to 115 participates in (6S)-5,6,7,8-tetrahydrofolate binding; the sequence is SILP.

The protein belongs to the Fmt family.

It carries out the reaction L-methionyl-tRNA(fMet) + (6R)-10-formyltetrahydrofolate = N-formyl-L-methionyl-tRNA(fMet) + (6S)-5,6,7,8-tetrahydrofolate + H(+). In terms of biological role, attaches a formyl group to the free amino group of methionyl-tRNA(fMet). The formyl group appears to play a dual role in the initiator identity of N-formylmethionyl-tRNA by promoting its recognition by IF2 and preventing the misappropriation of this tRNA by the elongation apparatus. This is Methionyl-tRNA formyltransferase from Shewanella baltica (strain OS155 / ATCC BAA-1091).